The chain runs to 429 residues: GTPase Obg (429 aa).

Residues 1–158 (MFVDHVKIYV…LNVILELKVL (158 aa)) form the Obg domain. Residues 119–143 (AGRGGRGNSRFATPANPAPELSEKG) are disordered. The OBG-type G domain occupies 159–329 (ADVGLVGFPS…LLFAIADLLE (171 aa)). Residues 165 to 172 (GFPSVGKS), 190 to 194 (FTTIV), 212 to 215 (DLPG), 282 to 285 (NKMD), and 310 to 312 (SAV) each bind GTP. Mg(2+) is bound by residues serine 172 and threonine 192. One can recognise an OCT domain in the interval 351 to 429 (KHEAKGEDFE…LQEFEFEFVD (79 aa)).

It belongs to the TRAFAC class OBG-HflX-like GTPase superfamily. OBG GTPase family. In terms of assembly, monomer. Mg(2+) serves as cofactor.

It localises to the cytoplasm. In terms of biological role, an essential GTPase which binds GTP, GDP and possibly (p)ppGpp with moderate affinity, with high nucleotide exchange rates and a fairly low GTP hydrolysis rate. Plays a role in control of the cell cycle, stress response, ribosome biogenesis and in those bacteria that undergo differentiation, in morphogenesis control. The chain is GTPase Obg from Lysinibacillus sphaericus (strain C3-41).